We begin with the raw amino-acid sequence, 590 residues long: ATP-dependent zinc metalloprotease FtsH 1 (590 aa).

At 1 to 8 (MLKLTKKQ) the chain is on the cytoplasmic side. A helical transmembrane segment spans residues 9-29 (LIIVLGIAIVVVSAIGYAVYT). Topologically, residues 30 to 103 (QYFNEDKLEI…QVRETTDQYS (74 aa)) are extracellular. The helical transmembrane segment at 104 to 124 (VVQVITFVVLIGGFIGVAIFL) threads the bilayer. At 125-590 (SKKNATQTSK…NEIFSGFQSM (466 aa)) the chain is on the cytoplasmic side. An ATP-binding site is contributed by 195–202 (GSPGTGKT). Residue H418 coordinates Zn(2+). Residue E419 is part of the active site. The Zn(2+) site is built by H422 and D496.

It in the central section; belongs to the AAA ATPase family. In the C-terminal section; belongs to the peptidase M41 family. Homohexamer. Zn(2+) serves as cofactor.

The protein localises to the cell membrane. Its function is as follows. Acts as a processive, ATP-dependent zinc metallopeptidase for both cytoplasmic and membrane proteins. Plays a role in the quality control of integral membrane proteins. The sequence is that of ATP-dependent zinc metalloprotease FtsH 1 from Alkaliphilus metalliredigens (strain QYMF).